A 422-amino-acid chain; its full sequence is UDP-N-acetylglucosamine 1-carboxyvinyltransferase (422 aa).

Position 22–23 (22–23) interacts with phosphoenolpyruvate; that stretch reads KN. A UDP-N-acetyl-alpha-D-glucosamine-binding site is contributed by Arg93. Cys117 (proton donor) is an active-site residue. Cys117 is modified (2-(S-cysteinyl)pyruvic acid O-phosphothioketal). UDP-N-acetyl-alpha-D-glucosamine is bound by residues 122 to 126, Asp308, and Leu330; that span reads RPVDL.

The protein belongs to the EPSP synthase family. MurA subfamily.

It is found in the cytoplasm. It catalyses the reaction phosphoenolpyruvate + UDP-N-acetyl-alpha-D-glucosamine = UDP-N-acetyl-3-O-(1-carboxyvinyl)-alpha-D-glucosamine + phosphate. The protein operates within cell wall biogenesis; peptidoglycan biosynthesis. Its function is as follows. Cell wall formation. Adds enolpyruvyl to UDP-N-acetylglucosamine. This is UDP-N-acetylglucosamine 1-carboxyvinyltransferase from Helicobacter pylori (strain ATCC 700392 / 26695) (Campylobacter pylori).